The sequence spans 145 residues: MKLNTIAPAEGSKKDRRRVGRGIGSGFGKTAGRGHKGQHARSGGYHKVGFEGGQMPLQRRIPKRGFRNTLGVRVVEVALSQLESAAIDGVVDLEGLLLRRIVRGSPDAVKVILTGEITQGLTVRGLRVSAGARAAIEKAGGKVED.

The interval 1 to 52 (MKLNTIAPAEGSKKDRRRVGRGIGSGFGKTAGRGHKGQHARSGGYHKVGFEG) is disordered. Residues 21 to 31 (RGIGSGFGKTA) are compositionally biased toward gly residues.

Belongs to the universal ribosomal protein uL15 family. Part of the 50S ribosomal subunit.

In terms of biological role, binds to the 23S rRNA. The sequence is that of Large ribosomal subunit protein uL15 from Acidithiobacillus ferrooxidans (strain ATCC 53993 / BNL-5-31) (Leptospirillum ferrooxidans (ATCC 53993)).